We begin with the raw amino-acid sequence, 389 residues long: Tryptophan 2,3-dioxygenase (389 aa).

Substrate-binding positions include Phe-60–His-64 and Arg-131. Residue His-316 coordinates heme. Residue Thr-331 participates in substrate binding.

Belongs to the tryptophan 2,3-dioxygenase family. In terms of assembly, homotetramer. Dimer of dimers. Requires heme as cofactor.

It carries out the reaction L-tryptophan + O2 = N-formyl-L-kynurenine. The protein operates within amino-acid degradation; L-tryptophan degradation via kynurenine pathway; L-kynurenine from L-tryptophan: step 1/2. It functions in the pathway pigment biosynthesis; ommochrome biosynthesis. In terms of biological role, heme-dependent dioxygenase that catalyzes the oxidative cleavage of the L-tryptophan (L-Trp) pyrrole ring and converts L-tryptophan to N-formyl-L-kynurenine. Catalyzes the oxidative cleavage of the indole moiety. The sequence is that of Tryptophan 2,3-dioxygenase from Mayetiola destructor (Hessian fly).